The following is an 880-amino-acid chain: DNA mismatch repair protein MutS (880 aa).

625–632 (GPNMAGKS) serves as a coordination point for ATP.

The protein belongs to the DNA mismatch repair MutS family.

Its function is as follows. This protein is involved in the repair of mismatches in DNA. It is possible that it carries out the mismatch recognition step. This protein has a weak ATPase activity. The polypeptide is DNA mismatch repair protein MutS (Alkaliphilus oremlandii (strain OhILAs) (Clostridium oremlandii (strain OhILAs))).